A 341-amino-acid chain; its full sequence is L-threonine 3-dehydrogenase (341 aa).

Zn(2+) is bound at residue C38. Active-site charge relay system residues include T40 and H43. 6 residues coordinate Zn(2+): H63, E64, C93, C96, C99, and C107. Residues I175, D195, R200, 262–264 (LGI), and 286–287 (IY) contribute to the NAD(+) site.

The protein belongs to the zinc-containing alcohol dehydrogenase family. As to quaternary structure, homotetramer. Requires Zn(2+) as cofactor.

The protein resides in the cytoplasm. It catalyses the reaction L-threonine + NAD(+) = (2S)-2-amino-3-oxobutanoate + NADH + H(+). It functions in the pathway amino-acid degradation; L-threonine degradation via oxydo-reductase pathway; glycine from L-threonine: step 1/2. In terms of biological role, catalyzes the NAD(+)-dependent oxidation of L-threonine to 2-amino-3-ketobutyrate. In Shigella dysenteriae serotype 1 (strain Sd197), this protein is L-threonine 3-dehydrogenase.